The following is a 734-amino-acid chain: Photosystem I P700 chlorophyll a apoprotein A2 (734 aa).

8 consecutive transmembrane segments (helical) span residues 46-69 (IFASHFGQLAIIFLWTSGNLFHVA), 135-158 (LYAGALFLLFLSVIFLIAGRLHLQ), 175-199 (LNHHLSGLFGVSSLAWTGHLVHVAI), 273-291 (MAHHHLAIALVFSIAGHMY), 330-353 (LHFQLGLALASLGVITSLVAQHMY), 369-395 (AALYTHHQYIAGFIMTGAFAHGAIFLI), 417-439 (AIISHLSWVSLLLGFHTLGLYVH), and 517-535 (FLVHHAIALGLHTTTLILV). [4Fe-4S] cluster is bound by residues C559 and C568. The next 2 helical transmembrane spans lie at 575-596 (AFYLAVFWMLNTIGWVTFYWHW) and 643-665 (LSVWAWMFLFGHLVWATGFMFLI). Chlorophyll a-binding residues include H654, M662, and Y670. W671 provides a ligand contact to phylloquinone. The chain crosses the membrane as a helical span at residues 707-727 (LVGLAHFSVGYIFTYAAFLIA).

It belongs to the PsaA/PsaB family. The PsaA/B heterodimer binds the P700 chlorophyll special pair and subsequent electron acceptors. PSI consists of a core antenna complex that captures photons, and an electron transfer chain that converts photonic excitation into a charge separation. The eukaryotic PSI reaction center is composed of at least 11 subunits. P700 is a chlorophyll a/chlorophyll a' dimer, A0 is one or more chlorophyll a, A1 is one or both phylloquinones and FX is a shared 4Fe-4S iron-sulfur center. serves as cofactor.

It is found in the plastid. It localises to the chloroplast thylakoid membrane. It carries out the reaction reduced [plastocyanin] + hnu + oxidized [2Fe-2S]-[ferredoxin] = oxidized [plastocyanin] + reduced [2Fe-2S]-[ferredoxin]. Functionally, psaA and PsaB bind P700, the primary electron donor of photosystem I (PSI), as well as the electron acceptors A0, A1 and FX. PSI is a plastocyanin-ferredoxin oxidoreductase, converting photonic excitation into a charge separation, which transfers an electron from the donor P700 chlorophyll pair to the spectroscopically characterized acceptors A0, A1, FX, FA and FB in turn. Oxidized P700 is reduced on the lumenal side of the thylakoid membrane by plastocyanin. In Pinus thunbergii (Japanese black pine), this protein is Photosystem I P700 chlorophyll a apoprotein A2.